Consider the following 355-residue polypeptide: MHTLPVKTGTRPLAQVQKLIPGLLLSAALAGVAILLGRSQWLQHNGISALTLAIVLGILVGNTLYPRIAAGSAAGVGFSKQILLRAGIILYGLRLTFQDIAGVGLHGVLLDALMLASTFGLACLLGTRLFGLDRTTTLLIGAGSSICGAAAVMATEPVVRGRAEQVAVAVSTVVVFGTLGIFLYPALFQLDQDWGLLPRDPGTWGVYIGATVHEVAQVVAAGRSIGIEAADTAVIAKMVRVMMLAPFLILLSAWLARDKAHRRQHSGATKITIPWFAVGFVLVAGLNSLVSLPPALVSHVNDLDTFLLAMAMAGLGLGTHLSAIRRAGLKPLLLAALLFAWLVLGGGFLTRLALA.

10 consecutive transmembrane segments (helical) span residues 20–37, 44–66, 71–93, 100–122, 137–159, 166–188, 233–255, 275–297, 307–324, and 331–353; these read IPGL…ILLG, HNGI…TLYP, GSAA…LYGL, IAGV…FGLA, TLLI…EPVV, VAVA…PALF, AVIA…SAWL, WFAV…PALV, LLAM…LSAI, and PLLL…TRLA.

This sequence belongs to the UPF0324 family.

It localises to the cell membrane. The chain is UPF0324 membrane protein PA5383 from Pseudomonas aeruginosa (strain ATCC 15692 / DSM 22644 / CIP 104116 / JCM 14847 / LMG 12228 / 1C / PRS 101 / PAO1).